Reading from the N-terminus, the 849-residue chain is MAP7 domain-containing protein 1 (849 aa).

Disordered regions lie at residues 1-151 (MESG…REER) and 186-210 (EQRL…EKNK). The span at 24–41 (EPRPSPEGDPSPPPPPTP) shows a compositional bias: pro residues. Phosphothreonine is present on residues Thr49 and Thr53. Phosphoserine occurs at positions 72 and 95. Thr99 bears the Phosphothreonine mark. Phosphoserine is present on residues Ser115 and Ser118. The residue at position 120 (Thr120) is a Phosphothreonine. Phosphoserine occurs at positions 125 and 127. Positions 132-151 (QDVKKAGERHKLAKERREER) are enriched in basic and acidic residues. Residues 167–223 (EKAKALREKQLQERRRRLEEQRLKAEQRRAALEERQRQKLEKNKERYEAAIQRSVKK) are a coiled coil. 5 positions are modified to phosphoserine: Ser256, Ser275, Ser315, Ser368, and Ser401. Positions 318–815 (TLPRNGRDQG…GFPAKGTAGD (498 aa)) are disordered. The segment covering 407 to 437 (RRLEATPVQKKEKKDKERENEKEKSALARER) has biased composition (basic and acidic residues). A phosphoserine mark is found at Ser444, Ser448, Ser454, and Ser460. Over residues 457-474 (AELSTKSKARPTSPSTTW) the composition is skewed to polar residues. A Glycyl lysine isopeptide (Lys-Gly) (interchain with G-Cter in SUMO2) cross-link involves residue Lys462. Phosphoserine is present on residues Ser479 and Ser496. Pro residues predominate over residues 479 to 497 (SPCPSPGPGHTLPPKPPSP). A compositionally biased stretch (basic and acidic residues) spans 523–539 (PEDKNHSKSRTAEEKEP). Over residues 542–556 (PASPAPSPVPSPTPA) the composition is skewed to pro residues. 3 positions are modified to phosphoserine: Ser544, Ser548, and Ser552. Thr554 carries the phosphothreonine modification. The segment covering 568 to 582 (PPDTAVPAVPTVPTF) has biased composition (low complexity). Residues 602–724 (TTDREEATRL…QERRKRLEEI (123 aa)) are a coiled coil. Residues 603 to 743 (TDREEATRLL…AETKKQDGKE (141 aa)) are compositionally biased toward basic and acidic residues.

It belongs to the MAP7 family.

It is found in the cytoplasm. Its subcellular location is the cytoskeleton. It localises to the spindle. The protein resides in the microtubule organizing center. The protein localises to the centrosome. It is found in the midbody. In terms of biological role, microtubule-stabilizing protein involved in the control of cell motility and neurite outgrowth. Facilitate microtubule stabilization through the maintenance of acetylated stable microtubules. The protein is MAP7 domain-containing protein 1 (Map7d1) of Rattus norvegicus (Rat).